The chain runs to 874 residues: Alanine--tRNA ligase (874 aa).

The Zn(2+) site is built by His-562, His-566, Cys-664, and His-668.

This sequence belongs to the class-II aminoacyl-tRNA synthetase family. Zn(2+) serves as cofactor.

Its subcellular location is the cytoplasm. It catalyses the reaction tRNA(Ala) + L-alanine + ATP = L-alanyl-tRNA(Ala) + AMP + diphosphate. Catalyzes the attachment of alanine to tRNA(Ala) in a two-step reaction: alanine is first activated by ATP to form Ala-AMP and then transferred to the acceptor end of tRNA(Ala). Also edits incorrectly charged Ser-tRNA(Ala) and Gly-tRNA(Ala) via its editing domain. The protein is Alanine--tRNA ligase of Shewanella sp. (strain ANA-3).